The following is a 473-amino-acid chain: Photosystem II CP43 reaction center protein (473 aa).

Residues 1–14 (MKTLYSLRRFYPVE) constitute a propeptide that is removed on maturation. At T15 the chain carries N-acetylthreonine. T15 carries the post-translational modification Phosphothreonine. The next 5 helical transmembrane spans lie at 69–93 (LFEVAHFVPEKPMYEQGLILLPHLA), 134–155 (LLGPETLEESFPFFGYVWKDRN), 178–200 (KALYFGGVYDTWAPGGGDVRKIT), 255–275 (KPFAWARRAFVWSGEAYLSYS), and 291–312 (WFNNTAYPSEFYGPTGPEASQA). Residue E367 participates in [CaMn4O5] cluster binding. Residues 447–471 (RARAAAAGFEKGIDRDLEPVLSMTP) form a helical membrane-spanning segment.

This sequence belongs to the PsbB/PsbC family. PsbC subfamily. In terms of assembly, PSII is composed of 1 copy each of membrane proteins PsbA, PsbB, PsbC, PsbD, PsbE, PsbF, PsbH, PsbI, PsbJ, PsbK, PsbL, PsbM, PsbT, PsbX, PsbY, PsbZ, Psb30/Ycf12, at least 3 peripheral proteins of the oxygen-evolving complex and a large number of cofactors. It forms dimeric complexes. Binds multiple chlorophylls and provides some of the ligands for the Ca-4Mn-5O cluster of the oxygen-evolving complex. It may also provide a ligand for a Cl- that is required for oxygen evolution. PSII binds additional chlorophylls, carotenoids and specific lipids. serves as cofactor.

It localises to the plastid. It is found in the chloroplast thylakoid membrane. Its function is as follows. One of the components of the core complex of photosystem II (PSII). It binds chlorophyll and helps catalyze the primary light-induced photochemical processes of PSII. PSII is a light-driven water:plastoquinone oxidoreductase, using light energy to abstract electrons from H(2)O, generating O(2) and a proton gradient subsequently used for ATP formation. This is Photosystem II CP43 reaction center protein from Phalaenopsis aphrodite subsp. formosana (Moth orchid).